The primary structure comprises 341 residues: Biotin synthase (341 aa).

The 225-residue stretch at 39-263 (EQVQLCTLLS…VAVARITMPL (225 aa)) folds into the Radical SAM core domain. 3 residues coordinate [4Fe-4S] cluster: C54, C58, and C61. C98, C129, C189, and R267 together coordinate [2Fe-2S] cluster.

The protein belongs to the radical SAM superfamily. Biotin synthase family. In terms of assembly, homodimer. It depends on [4Fe-4S] cluster as a cofactor. [2Fe-2S] cluster is required as a cofactor.

The enzyme catalyses (4R,5S)-dethiobiotin + (sulfur carrier)-SH + 2 reduced [2Fe-2S]-[ferredoxin] + 2 S-adenosyl-L-methionine = (sulfur carrier)-H + biotin + 2 5'-deoxyadenosine + 2 L-methionine + 2 oxidized [2Fe-2S]-[ferredoxin]. It participates in cofactor biosynthesis; biotin biosynthesis; biotin from 7,8-diaminononanoate: step 2/2. In terms of biological role, catalyzes the conversion of dethiobiotin (DTB) to biotin by the insertion of a sulfur atom into dethiobiotin via a radical-based mechanism. The protein is Biotin synthase of Erythrobacter litoralis (strain HTCC2594).